Here is a 213-residue protein sequence, read N- to C-terminus: 2,3-bisphosphoglycerate-dependent phosphoglycerate mutase (213 aa).

Residues 8–15 (RHGQSEWN), 21–22 (TG), arginine 58, 84–87 (ERNY), lysine 95, 111–112 (RR), and 155–156 (GN) contribute to the substrate site. Residue histidine 9 is the Tele-phosphohistidine intermediate of the active site. Glutamate 84 (proton donor/acceptor) is an active-site residue.

Belongs to the phosphoglycerate mutase family. BPG-dependent PGAM subfamily.

It carries out the reaction (2R)-2-phosphoglycerate = (2R)-3-phosphoglycerate. The protein operates within carbohydrate degradation; glycolysis; pyruvate from D-glyceraldehyde 3-phosphate: step 3/5. Its function is as follows. Catalyzes the interconversion of 2-phosphoglycerate and 3-phosphoglycerate. This chain is 2,3-bisphosphoglycerate-dependent phosphoglycerate mutase, found in Cytophaga hutchinsonii (strain ATCC 33406 / DSM 1761 / CIP 103989 / NBRC 15051 / NCIMB 9469 / D465).